Reading from the N-terminus, the 94-residue chain is Aspartyl/glutamyl-tRNA(Asn/Gln) amidotransferase subunit C (94 aa).

Belongs to the GatC family. Heterotrimer of A, B and C subunits.

It catalyses the reaction L-glutamyl-tRNA(Gln) + L-glutamine + ATP + H2O = L-glutaminyl-tRNA(Gln) + L-glutamate + ADP + phosphate + H(+). The enzyme catalyses L-aspartyl-tRNA(Asn) + L-glutamine + ATP + H2O = L-asparaginyl-tRNA(Asn) + L-glutamate + ADP + phosphate + 2 H(+). Allows the formation of correctly charged Asn-tRNA(Asn) or Gln-tRNA(Gln) through the transamidation of misacylated Asp-tRNA(Asn) or Glu-tRNA(Gln) in organisms which lack either or both of asparaginyl-tRNA or glutaminyl-tRNA synthetases. The reaction takes place in the presence of glutamine and ATP through an activated phospho-Asp-tRNA(Asn) or phospho-Glu-tRNA(Gln). This Desulfatibacillum aliphaticivorans protein is Aspartyl/glutamyl-tRNA(Asn/Gln) amidotransferase subunit C.